A 652-amino-acid polypeptide reads, in one-letter code: Probable serine/threonine-protein kinase mkcD (652 aa).

Disordered stretches follow at residues 1–47 (MNNI…RKNK), 163–198 (NPID…LTNV), and 257–289 (QQKL…TLSP). The segment covering 182–191 (NGGGSGGGGD) has biased composition (gly residues). Residues 231–275 (KNNQNLHHKQQQLQQLQQLKQQHLQQQQKLKQEQQQEQQQQQEDE) are a coiled coil. The span at 257–271 (QQKLKQEQQQEQQQQ) shows a compositional bias: low complexity. Polar residues predominate over residues 279–289 (SPVSTSSTLSP). One can recognise a Protein kinase domain in the interval 369-626 (FKNLDFEARG…SSQLLQHPFL (258 aa)). ATP contacts are provided by residues 375–383 (EARGGFGSV) and lysine 403. The active-site Proton acceptor is the aspartate 494.

The protein belongs to the protein kinase superfamily. STE Ser/Thr protein kinase family. STE20 subfamily. Mg(2+) serves as cofactor.

It catalyses the reaction L-seryl-[protein] + ATP = O-phospho-L-seryl-[protein] + ADP + H(+). The enzyme catalyses L-threonyl-[protein] + ATP = O-phospho-L-threonyl-[protein] + ADP + H(+). The sequence is that of Probable serine/threonine-protein kinase mkcD from Dictyostelium discoideum (Social amoeba).